A 234-amino-acid chain; its full sequence is UPF0502 protein Reut_B4455 (234 aa).

This sequence belongs to the UPF0502 family.

The polypeptide is UPF0502 protein Reut_B4455 (Cupriavidus pinatubonensis (strain JMP 134 / LMG 1197) (Cupriavidus necator (strain JMP 134))).